Here is a 478-residue protein sequence, read N- to C-terminus: Glutamate--tRNA ligase (478 aa).

Residues 8–18 (PSPTGYLHLGN) carry the 'HIGH' region motif. The 'KMSKS' region signature appears at 248-252 (KLSKR). Lys-251 contacts ATP.

It belongs to the class-I aminoacyl-tRNA synthetase family. Glutamate--tRNA ligase type 1 subfamily. As to quaternary structure, monomer.

The protein localises to the cytoplasm. The catalysed reaction is tRNA(Glu) + L-glutamate + ATP = L-glutamyl-tRNA(Glu) + AMP + diphosphate. Functionally, catalyzes the attachment of glutamate to tRNA(Glu) in a two-step reaction: glutamate is first activated by ATP to form Glu-AMP and then transferred to the acceptor end of tRNA(Glu). The polypeptide is Glutamate--tRNA ligase (Sulfurihydrogenibium sp. (strain YO3AOP1)).